A 91-amino-acid chain; its full sequence is Large ribosomal subunit protein uL22 (91 aa).

It belongs to the universal ribosomal protein uL22 family. Part of the 50S ribosomal subunit.

Its function is as follows. This protein binds specifically to 23S rRNA; its binding is stimulated by other ribosomal proteins, e.g. L4, L17, and L20. It is important during the early stages of 50S assembly. It makes multiple contacts with different domains of the 23S rRNA in the assembled 50S subunit and ribosome. The globular domain of the protein is located near the polypeptide exit tunnel on the outside of the subunit, while an extended beta-hairpin is found that lines the wall of the exit tunnel in the center of the 70S ribosome. The chain is Large ribosomal subunit protein uL22 (rplV) from Ash yellows phytoplasma.